The following is a 219-amino-acid chain: MVLRSQILAHKLALPTAEQALPGRAEPLPVAQQHHVNGNPIKPPFPAPMQQAVFGLGCFWGAERRFWQQPGVFSTAVGYAGGFTPNPTYEEVCSGLTGHTEVVLVVFDPQQTSFDALLKVFWEAHNPTQGMRQGNDQGTQYRSAIYCQDHAQLEAALASQARFQAELDKAGLGSITTEICEAPIFYYAETYHQQYLAKNPGGYCGLGGTGVCLPPEPAA.

Residue cysteine 58 is part of the active site.

The protein belongs to the MsrA Met sulfoxide reductase family.

It carries out the reaction L-methionyl-[protein] + [thioredoxin]-disulfide + H2O = L-methionyl-(S)-S-oxide-[protein] + [thioredoxin]-dithiol. The enzyme catalyses [thioredoxin]-disulfide + L-methionine + H2O = L-methionine (S)-S-oxide + [thioredoxin]-dithiol. Has an important function as a repair enzyme for proteins that have been inactivated by oxidation. Catalyzes the reversible oxidation-reduction of methionine sulfoxide in proteins to methionine. The sequence is that of Peptide methionine sulfoxide reductase MsrA from Ectopseudomonas mendocina (strain ymp) (Pseudomonas mendocina).